Reading from the N-terminus, the 90-residue chain is MSKARVYADVNVLRPKEYWDYEALTVQWGEQDDYEVVRKVGRGKYSEVFEGINVNNNEKCIIKILKPVKKKKIKREIKILQNLCGGPNIV.

ATP contacts are provided by residues 40–48 and lysine 63; that span reads VGRGKYSEV.

This sequence belongs to the protein kinase superfamily. Ser/Thr protein kinase family. CK2 subfamily.

The Nipponbare allele of HD6 contains a premature stop codon, resulting in a truncated non-functional product. In Oryza sativa subsp. japonica (Rice), this protein is Inactive casein kinase II subunit alpha-2.